The sequence spans 513 residues: ATP synthase subunit alpha (513 aa).

Residue 169–176 participates in ATP binding; that stretch reads GDRQTGKT.

Belongs to the ATPase alpha/beta chains family. As to quaternary structure, F-type ATPases have 2 components, CF(1) - the catalytic core - and CF(0) - the membrane proton channel. CF(1) has five subunits: alpha(3), beta(3), gamma(1), delta(1), epsilon(1). CF(0) has three main subunits: a(1), b(2) and c(9-12). The alpha and beta chains form an alternating ring which encloses part of the gamma chain. CF(1) is attached to CF(0) by a central stalk formed by the gamma and epsilon chains, while a peripheral stalk is formed by the delta and b chains.

It localises to the cell inner membrane. The catalysed reaction is ATP + H2O + 4 H(+)(in) = ADP + phosphate + 5 H(+)(out). Its function is as follows. Produces ATP from ADP in the presence of a proton gradient across the membrane. The alpha chain is a regulatory subunit. The sequence is that of ATP synthase subunit alpha from Shigella boydii serotype 18 (strain CDC 3083-94 / BS512).